Consider the following 462-residue polypeptide: Protein phosphatase 1M (462 aa).

Residues 1-10 show a composition bias toward basic residues; it reads MSAGWFRRRF. The disordered stretch occupies residues 1-66; sequence MSAGWFRRRF…PVRSPARGRT (66 aa). The region spanning 100 to 452 is the PPM-type phosphatase domain; that stretch reads EFGIEEDQEW…DDVSVFVIPL (353 aa). Positions 127 and 128 each coordinate Mn(2+).

Belongs to the PP2C family. Requires Mg(2+) as cofactor. It depends on Mn(2+) as a cofactor. As to expression, widely expressed with highest levels in testis and lower levels in lung, kidney and brain.

It localises to the nucleus. It carries out the reaction O-phospho-L-seryl-[protein] + H2O = L-seryl-[protein] + phosphate. It catalyses the reaction O-phospho-L-threonyl-[protein] + H2O = L-threonyl-[protein] + phosphate. This chain is Protein phosphatase 1M, found in Mus musculus (Mouse).